We begin with the raw amino-acid sequence, 189 residues long: RPW8-like protein 1 (189 aa).

Residues 1–153 (MPLVELLTSA…ITRQPMDIIE (153 aa)) form the RPW8 domain. The helical transmembrane segment at 7 to 24 (LTSAALGLSLQLLHDAII) threads the bilayer. 2 coiled-coil regions span residues 65–92 (FRKV…LKLR) and 126–147 (DIKK…ITRQ). N177 is a glycosylation site (N-linked (GlcNAc...) asparagine).

Belongs to the plant RPW8 protein family.

It localises to the membrane. Its function is as follows. Probable disease resistance (R) protein. In Arabidopsis thaliana (Mouse-ear cress), this protein is RPW8-like protein 1.